A 261-amino-acid chain; its full sequence is Vacuolar iron transporter (261 aa).

A helical membrane pass occupies residues 66–86; the sequence is GQVLIAALAALFAGALSMAVG. Positions 105, 108, 116, 119, and 154 each coordinate Fe cation. 3 consecutive transmembrane segments (helical) span residues 170 to 190, 197 to 217, and 233 to 253; these read MVSF…GAWI, IGAI…VGAF, and GGAL…TLNI.

This sequence belongs to the CCC1 family.

It is found in the vacuole membrane. The enzyme catalyses Fe(2+)(in) = Fe(2+)(out). In terms of biological role, vacuolar iron transporter involved in the transfer of iron ions from the cytosol to the vacuole for intracellular iron storage. The protein is Vacuolar iron transporter of Acanthamoeba castellanii (strain ATCC 30010 / Neff).